Consider the following 374-residue polypeptide: uncharacterized protein (374 aa).

Belongs to the mimivirus R640 family.

Its subcellular location is the virion. This is an uncharacterized protein from Acanthamoeba polyphaga (Amoeba).